The chain runs to 183 residues: Oleosin-B2 (183 aa).

The interval 1–23 (QASIFSRFFRMFSFIFPFVNVIK) is polar. Transmembrane regions (helical) follow at residues 24 to 44 (LIIA…ALGG), 46 to 66 (AVAL…LVPA), and 72 to 92 (LLAS…GLIM). Positions 24 to 95 (LIIASVTSLV…TGIGLIMGLV (72 aa)) are hydrophobic.

It belongs to the oleosin family. In terms of tissue distribution, the full-length protein is found in the tapetal lipid bodies of immature anthers, the proteolytically cleaved C-terminal product is found on the coats of pollen grains. Not present in seeds.

It is found in the lipid droplet. Its subcellular location is the membrane. Many of the major pollen coat proteins are derived from endoproteolytic cleavage of oleosin-like proteins. The sequence is that of Oleosin-B2 (OlnB2) from Brassica napus (Rape).